The following is a 649-amino-acid chain: Lysophospholipase (649 aa).

The first 21 residues, 1-21 (MNLKEWLLFSDAVFFAQGTLA), serve as a signal peptide directing secretion. 17 N-linked (GlcNAc...) asparagine glycosylation sites follow: Asn32, Asn51, Asn77, Asn90, Asn121, Asn158, Asn168, Asn213, Asn275, Asn343, Asn386, Asn457, Asn487, Asn511, Asn539, Asn563, and Asn580. Residues 34-584 (SCDEDINLIR…TNYCWNGTID (551 aa)) form the PLA2c domain.

This sequence belongs to the lysophospholipase family.

The protein resides in the secreted. It catalyses the reaction a 1-acyl-sn-glycero-3-phosphocholine + H2O = sn-glycerol 3-phosphocholine + a fatty acid + H(+). Catalyzes the release of fatty acids from lysophospholipids. This is Lysophospholipase from Torulaspora delbrueckii (Yeast).